Reading from the N-terminus, the 545-residue chain is Glucose-6-phosphate isomerase (545 aa).

E351 serves as the catalytic Proton donor. Residues H382 and K510 contribute to the active site.

This sequence belongs to the GPI family.

The protein localises to the cytoplasm. It carries out the reaction alpha-D-glucose 6-phosphate = beta-D-fructose 6-phosphate. It functions in the pathway carbohydrate biosynthesis; gluconeogenesis. It participates in carbohydrate degradation; glycolysis; D-glyceraldehyde 3-phosphate and glycerone phosphate from D-glucose: step 2/4. Catalyzes the reversible isomerization of glucose-6-phosphate to fructose-6-phosphate. This chain is Glucose-6-phosphate isomerase, found in Shewanella amazonensis (strain ATCC BAA-1098 / SB2B).